The sequence spans 273 residues: 4-hydroxy-tetrahydrodipicolinate reductase (273 aa).

NAD(+)-binding positions include 12–17 (GAGGRM) and Glu-38. Arg-39 lines the NADP(+) pocket. Residues 102–104 (GTT) and 126–129 (AANF) each bind NAD(+). His-159 acts as the Proton donor/acceptor in catalysis. Position 160 (His-160) interacts with (S)-2,3,4,5-tetrahydrodipicolinate. The active-site Proton donor is the Lys-163. A (S)-2,3,4,5-tetrahydrodipicolinate-binding site is contributed by 169–170 (GT).

This sequence belongs to the DapB family. As to quaternary structure, homotetramer.

It is found in the cytoplasm. It catalyses the reaction (S)-2,3,4,5-tetrahydrodipicolinate + NAD(+) + H2O = (2S,4S)-4-hydroxy-2,3,4,5-tetrahydrodipicolinate + NADH + H(+). The enzyme catalyses (S)-2,3,4,5-tetrahydrodipicolinate + NADP(+) + H2O = (2S,4S)-4-hydroxy-2,3,4,5-tetrahydrodipicolinate + NADPH + H(+). Its pathway is amino-acid biosynthesis; L-lysine biosynthesis via DAP pathway; (S)-tetrahydrodipicolinate from L-aspartate: step 4/4. Functionally, catalyzes the conversion of 4-hydroxy-tetrahydrodipicolinate (HTPA) to tetrahydrodipicolinate. In Shigella sonnei (strain Ss046), this protein is 4-hydroxy-tetrahydrodipicolinate reductase.